Here is a 588-residue protein sequence, read N- to C-terminus: NADP-dependent malic enzyme 3 (588 aa).

At Gly2 the chain carries N-acetylglycine. Tyr136 serves as the catalytic Proton donor. Residue Arg189 coordinates NADP(+). The active-site Proton acceptor is Lys207. 3 residues coordinate a divalent metal cation: Glu279, Asp280, and Asp303. Residues Asp303, 332–348 (LFLG…ELIA), and Asn444 contribute to the NADP(+) site.

It belongs to the malic enzymes family. In terms of assembly, homohexamers and homooctamers. Mg(2+) serves as cofactor. Requires Mn(2+) as cofactor. As to expression, mostly expressed in flowers, and, to a lower extent, in stems. In leaves and stems, restricted to the trichomes and trichome basal cells. Also present in the stipules flanking the base of the inflorescence bract leaves and in the meristematic zone of developing lateral roots. In flowers, present in pollen and the abscission zone of developing siliques.

It localises to the cytoplasm. The enzyme catalyses (S)-malate + NADP(+) = pyruvate + CO2 + NADPH. It catalyses the reaction oxaloacetate + H(+) = pyruvate + CO2. With respect to regulation, slightly activated by succinate and aspartate. Repressed by fumarate, malate, oxaloacetate and glucose. In Arabidopsis thaliana (Mouse-ear cress), this protein is NADP-dependent malic enzyme 3 (NADP-ME3).